The sequence spans 221 residues: MGRKRLSDFGNARLACHDVSCLRGDRLLFTHLSFEVKAGEAVLITGANGIGKSSLLRLLAGFLKPFSGHIEKWGRVAFADEALAMDRHLPLEKALAYWAALDGVLGAEKEAMAVMALDILADSPVRLLSTGQRKRAVLARLLASQAAIWLLDEPANGLDAASVRALIEMIEHHRQKGGIILAVSHQGLDMADYKTLSLENFVANSGQSSGFFDLLDESHFS.

In terms of domain architecture, ABC transporter spans 14–221; sequence LACHDVSCLR…FDLLDESHFS (208 aa). 46-53 is an ATP binding site; it reads GANGIGKS.

This sequence belongs to the ABC transporter superfamily. CcmA exporter (TC 3.A.1.107) family. As to quaternary structure, the complex is composed of two ATP-binding proteins (CcmA) and two transmembrane proteins (CcmB).

It localises to the cell inner membrane. It carries out the reaction heme b(in) + ATP + H2O = heme b(out) + ADP + phosphate + H(+). Its function is as follows. Part of the ABC transporter complex CcmAB involved in the biogenesis of c-type cytochromes; once thought to export heme, this seems not to be the case, but its exact role is uncertain. Responsible for energy coupling to the transport system. This is Cytochrome c biogenesis ATP-binding export protein CcmA from Zymomonas mobilis subsp. mobilis (strain ATCC 31821 / ZM4 / CP4).